Reading from the N-terminus, the 57-residue chain is DNA-directed RNA polymerase subunit Rpo6 (57 aa).

It belongs to the archaeal Rpo6/eukaryotic RPB6 RNA polymerase subunit family. In terms of assembly, part of the RNA polymerase complex.

The protein resides in the cytoplasm. It catalyses the reaction RNA(n) + a ribonucleoside 5'-triphosphate = RNA(n+1) + diphosphate. Its function is as follows. DNA-dependent RNA polymerase (RNAP) catalyzes the transcription of DNA into RNA using the four ribonucleoside triphosphates as substrates. This Thermococcus onnurineus (strain NA1) protein is DNA-directed RNA polymerase subunit Rpo6.